The chain runs to 397 residues: Elongation factor Tu (397 aa).

One can recognise a tr-type G domain in the interval 10–206; sequence KPHCNIGTIG…TIDEYVPDPE (197 aa). Residues 19-26 form a G1 region; it reads GHVDHGKT. Residue 19–26 participates in GTP binding; sequence GHVDHGKT. Residue Thr-26 participates in Mg(2+) binding. The tract at residues 61-65 is G2; it reads GITIS. The interval 82–85 is G3; the sequence is DCPG. GTP is bound by residues 82–86 and 137–140; these read DCPGH and NKCD. The G4 stretch occupies residues 137-140; it reads NKCD. The G5 stretch occupies residues 175 to 177; the sequence is SAL.

Belongs to the TRAFAC class translation factor GTPase superfamily. Classic translation factor GTPase family. EF-Tu/EF-1A subfamily. As to quaternary structure, monomer.

The protein localises to the cytoplasm. It catalyses the reaction GTP + H2O = GDP + phosphate + H(+). GTP hydrolase that promotes the GTP-dependent binding of aminoacyl-tRNA to the A-site of ribosomes during protein biosynthesis. The sequence is that of Elongation factor Tu from Lachnospira eligens (strain ATCC 27750 / DSM 3376 / VPI C15-48 / C15-B4) (Eubacterium eligens).